A 570-amino-acid chain; its full sequence is Urease subunit alpha (570 aa).

One can recognise a Urease domain in the interval 131 to 570 (GGFDSHIHFI…LPLAQRYFMF (440 aa)). Ni(2+)-binding residues include His-136, His-138, and Lys-219. An N6-carboxylysine modification is found at Lys-219. His-221 is a binding site for substrate. Ni(2+) contacts are provided by His-248 and His-274. His-322 serves as the catalytic Proton donor. Asp-362 serves as a coordination point for Ni(2+).

This sequence belongs to the metallo-dependent hydrolases superfamily. Urease alpha subunit family. Heterotrimer of UreA (gamma), UreB (beta) and UreC (alpha) subunits. Three heterotrimers associate to form the active enzyme. Requires Ni cation as cofactor. In terms of processing, carboxylation allows a single lysine to coordinate two nickel ions.

It is found in the cytoplasm. It catalyses the reaction urea + 2 H2O + H(+) = hydrogencarbonate + 2 NH4(+). The protein operates within nitrogen metabolism; urea degradation; CO(2) and NH(3) from urea (urease route): step 1/1. This chain is Urease subunit alpha, found in Rhodopseudomonas palustris (strain ATCC BAA-98 / CGA009).